The chain runs to 397 residues: Yellow-related salivary protein LJM111 (397 aa).

Positions 1–18 (MKLFFFLYTFGLVQTIFG) are cleaved as a signal peptide.

Belongs to the major royal jelly protein family. In terms of tissue distribution, salivary gland (at protein level).

Its subcellular location is the secreted. In terms of biological role, probably modulates blood feeding of sand flies on vertebrate species by binding and sequestering different mediators involved in the host response. Binds biogenic amines. Binds adrenaline and noradrenaline with high affinity. Binds serotonin. Binds dopamine and octopamine. Exhibits anti-inflammatory effects in the host: reduces IL17A, TNF-alpha (TNF) and IFN-gamma (IFNG) production by host lymph node cells, suppresses expression of MHC-II and CD86, reduces TNF-alpha production and increases IL10 production, in host bone marrow-derived dendritic cells (BMDCs) stimulated by lipopolysaccharides. Reduces pain in mouse mechanical hypernociception model. The chain is Yellow-related salivary protein LJM111 from Lutzomyia longipalpis (Sand fly).